Here is a 710-residue protein sequence, read N- to C-terminus: DNA polymerase epsilon subunit B (710 aa).

A disordered region spans residues 116–167 (FLKRPNSPTDTEITTLSQGSATSVVNPDSHSPMMLEEGSPINSDSEPISEHE). Polar residues predominate over residues 121-144 (NSPTDTEITTLSQGSATSVVNPDS).

The protein belongs to the DNA polymerase epsilon subunit B family. As to quaternary structure, heterotetramer. Consists of four subunits: POL2, DPB2, DPB3 and DPB4.

The protein resides in the nucleus. Functionally, as accessory component of the DNA polymerase epsilon (DNA polymerase II) participates in chromosomal DNA replication. The chain is DNA polymerase epsilon subunit B (DPB2) from Kluyveromyces lactis (strain ATCC 8585 / CBS 2359 / DSM 70799 / NBRC 1267 / NRRL Y-1140 / WM37) (Yeast).